The sequence spans 340 residues: Armadillo repeat-containing protein 12 (340 aa).

The interval 1–101 (MGKTIPRFLE…NITRCVYLLE (101 aa)) is interaction with TBC1D15. 3 ARM repeats span residues 100–139 (LEAE…AFSG), 179–218 (LPDY…YLAQ), and 278–318 (SLHE…SLQC). A disordered region spans residues 321 to 340 (DLGSRPSSCRPSHSCFKTGK). Residues 324 to 340 (SRPSSCRPSHSCFKTGK) show a composition bias toward low complexity.

In terms of assembly, interacts with TBC1D15, TBC1D21, GK2 and IMMT. Interacts with VDAC2 and VDAC3 in a TBC1D21-dependent manner. Interacts (via ARM domains) with RBBP4. As to expression, testis-specific.

It localises to the nucleus. The protein localises to the mitochondrion outer membrane. Essential for male fertility and sperm mitochondrial sheath formation. Required for proper mitochondrial elongation and coiling along the flagellum during the formation of the mitochondrial sheath. Facilitates the growth and aggressiveness of neuroblastoma cells. Increases the EZH2 activity and H3K27me3 levels in a RBBP4-dependent manner, and facilitates the enrichment of polycomb repressive complex 2 and H3K27me3 on gene promoters, resulting in transcriptional repression of tumor suppressors affecting the proliferation, invasion, and metastasis of tumor cells. The sequence is that of Armadillo repeat-containing protein 12 (Armc12) from Mus musculus (Mouse).